The primary structure comprises 152 residues: Aspartate carbamoyltransferase regulatory chain (152 aa).

Zn(2+) is bound by residues C108, C113, C136, and C139.

The protein belongs to the PyrI family. As to quaternary structure, contains catalytic and regulatory chains. Zn(2+) serves as cofactor.

Its function is as follows. Involved in allosteric regulation of aspartate carbamoyltransferase. This Pyrococcus furiosus (strain ATCC 43587 / DSM 3638 / JCM 8422 / Vc1) protein is Aspartate carbamoyltransferase regulatory chain.